A 162-amino-acid chain; its full sequence is Small ribosomal subunit protein uS12m (162 aa).

The N-terminal 37 residues, 1-37, are a transit peptide targeting the mitochondrion; that stretch reads MIRFAQYARYPVISRLMKPTVISPFQAQAFSSSSVML.

Belongs to the universal ribosomal protein uS12 family. In terms of assembly, component of the mitochondrial small ribosomal subunit (mt-SSU). Mature yeast 74S mitochondrial ribosomes consist of a small (37S) and a large (54S) subunit. The 37S small subunit contains a 15S ribosomal RNA (15S mt-rRNA) and at least 32 different proteins. The 54S large subunit contains a 21S rRNA (21S mt-rRNA) and at least 45 different proteins. uS12m forms part of the decoding center of the mt-SSU.

Its subcellular location is the mitochondrion. In terms of biological role, component of the mitochondrial ribosome (mitoribosome), a dedicated translation machinery responsible for the synthesis of mitochondrial genome-encoded proteins, including at least some of the essential transmembrane subunits of the mitochondrial respiratory chain. The mitoribosomes are attached to the mitochondrial inner membrane and translation products are cotranslationally integrated into the membrane. uS12m is required for respiratory growth. The chain is Small ribosomal subunit protein uS12m from Schizosaccharomyces pombe (strain 972 / ATCC 24843) (Fission yeast).